A 191-amino-acid chain; its full sequence is Gamma-glutamylaminecyclotransferase B (191 aa).

7 to 10 provides a ligand contact to substrate; that stretch reads YGTL. Glu82 functions as the Proton acceptor in the catalytic mechanism. Residues 155–178 are compositionally biased toward polar residues; sequence SADFSQNSEQEIKKNNSLQILTST. The tract at residues 155 to 191 is disordered; it reads SADFSQNSEQEIKKNNSLQILTSTGDDHDVNFRGPLQ.

The protein belongs to the gamma-glutamylcyclotransferase family.

It carries out the reaction epsilon-(gamma-L-glutamyl)-L-lysine = 5-oxo-L-proline + L-lysine. Functionally, may contribute to degradation of proteins cross-linked by transglutaminases by degrading the cross-link between a lysine and a glutamic acid residue. Catalyzes the formation of 5-oxo-L-proline from L-gamma-glutamyl-L-epsilon-lysine. The protein is Gamma-glutamylaminecyclotransferase B (ggact.2) of Danio rerio (Zebrafish).